Reading from the N-terminus, the 201-residue chain is Sterile alpha motif domain-containing protein 12 (201 aa).

The 67-residue stretch at 77 to 143 (WTQQDVCKWL…LQQVLQLKVR (67 aa)) folds into the SAM domain.

Expressed in the brain.

This chain is Sterile alpha motif domain-containing protein 12 (SAMD12), found in Homo sapiens (Human).